The following is an 826-amino-acid chain: Arf-GAP with ANK repeat and PH domain-containing protein cnt-1 (826 aa).

The PH domain occupies 275–373 (DVMMEGYLYK…WMRALQRTIL (99 aa)). Positions 447–572 (TTAFEQVRRV…RFAVAEDTRA (126 aa)) constitute an Arf-GAP domain. A C4-type zinc finger spans residues 462 to 485 (CADCGSPAPKWVSINLGVVLCIEC). Residues 570–604 (TRARSSATNRQEHLKHKTSIGGNSSSNGVNRSSSY) are disordered. The span at 588 to 603 (SIGGNSSSNGVNRSSS) shows a compositional bias: low complexity. ANK repeat units lie at residues 690-719 (NGTTALHIATRNGQTAAVEFLLLNGAKINM), 723-752 (KLNTPLHLAAKEGHTLPVCQLLKRGADSNL), and 756-789 (DSKTPLDIAMECTHADIVTLFRVTIMRNDFNADF).

As to quaternary structure, interacts (via C-terminal ankyrin repeat) with rab-10 (GTP-bound form); the interaction is required for cnt-1 recruitment to endosomes. Interacts (via C-terminal ankyrin repeat) with rab-8 (GTP-bound form) and rab-35 (GTP-bound form). Cleaved by caspase ced-3 after Asp-382 and Asp-609. Cleavage at Asp-382 is required for subsequent cleavage at Asp-609.

It localises to the cytoplasm. Its subcellular location is the recycling endosome membrane. The protein resides in the basolateral cell membrane. The protein localises to the apical cell membrane. It is found in the cell membrane. In terms of biological role, GTPase-activating protein for the ADP ribosylation factor family. Regulates endosome recycling downstream of rab-10 and upstream of arf-6. Its function is as follows. Promotes apoptosis during embryonic development. Produced by caspase ced-3-mediated cleavage, and translocates to the plasma membrane where it prevents the activation of the prosurvival Akt-1/2 and sgk-1 signaling pathway by competing with Akt-1/2 for the binding to PtdIns(3,4,5)P3. In Caenorhabditis elegans, this protein is Arf-GAP with ANK repeat and PH domain-containing protein cnt-1.